We begin with the raw amino-acid sequence, 149 residues long: Calmodulin (149 aa).

Ala2 is modified (N-acetylalanine). 4 consecutive EF-hand domains span residues 8 to 43, 44 to 79, 81 to 116, and 117 to 149; these read EQIA…LGQN, PTEA…KMKD, DSEE…LGEK, and LTDE…MMAK. Ca(2+)-binding residues include Asp21, Asp23, Asp25, Ser27, Glu32, Asp57, Asp59, Asn61, Thr63, Glu68, Asp94, Asp96, Asn98, Tyr100, and Asp105. The residue at position 116 (Lys116) is an N6,N6,N6-trimethyllysine. Asp130, Asp132, Asp134, Gln136, and Glu141 together coordinate Ca(2+).

Belongs to the calmodulin family.

Functionally, calmodulin mediates the control of a large number of enzymes, ion channels and other proteins by Ca(2+). Among the enzymes to be stimulated by the calmodulin-Ca(2+) complex are a number of protein kinases and phosphatases. This Mougeotia scalaris (Green alga) protein is Calmodulin.